Consider the following 67-residue polypeptide: Conotoxin Cal14.2c (67 aa).

The first 20 residues, 1–20, serve as a signal peptide directing secretion; that stretch reads MNVTVMFLVLLLLTMPLTDG. The propeptide occupies 21 to 48; it reads FNIRATNGGELFGPVQRDAGNVLDHGFQ.

This sequence belongs to the conotoxin L superfamily. In terms of processing, contains 2 disulfide bonds. As to expression, expressed by the venom duct.

The protein localises to the secreted. Its function is as follows. Probable neurotoxin with unknown target. Possibly targets ion channels. In Californiconus californicus (California cone), this protein is Conotoxin Cal14.2c.